Reading from the N-terminus, the 2300-residue chain is Protein Ycf2 (2300 aa).

Residue Gly-1642–Ser-1649 participates in ATP binding.

This sequence belongs to the Ycf2 family.

Its subcellular location is the plastid. The protein localises to the chloroplast stroma. Probable ATPase of unknown function. Its presence in a non-photosynthetic plant (Epifagus virginiana) and experiments in tobacco indicate that it has an essential function which is probably not related to photosynthesis. This is Protein Ycf2 from Vitis vinifera (Grape).